The sequence spans 465 residues: ATP synthase subunit beta (465 aa).

151–158 (GGAGVGKT) provides a ligand contact to ATP.

The protein belongs to the ATPase alpha/beta chains family. In terms of assembly, F-type ATPases have 2 components, CF(1) - the catalytic core - and CF(0) - the membrane proton channel. CF(1) has five subunits: alpha(3), beta(3), gamma(1), delta(1), epsilon(1). CF(0) has four main subunits: a(1), b(1), b'(1) and c(9-12).

It is found in the cell inner membrane. The enzyme catalyses ATP + H2O + 4 H(+)(in) = ADP + phosphate + 5 H(+)(out). Its function is as follows. Produces ATP from ADP in the presence of a proton gradient across the membrane. The catalytic sites are hosted primarily by the beta subunits. The protein is ATP synthase subunit beta of Chloroherpeton thalassium (strain ATCC 35110 / GB-78).